The sequence spans 203 residues: Histidine biosynthesis bifunctional protein HisIE (203 aa).

The segment at 1–108 (MELDFDKMNG…GEKNEEPVMF (108 aa)) is phosphoribosyl-AMP cyclohydrolase. The interval 109 to 203 (LKALQDFIDK…ERHSSTWKKH (95 aa)) is phosphoribosyl-ATP pyrophosphohydrolase.

This sequence in the N-terminal section; belongs to the PRA-CH family. It in the C-terminal section; belongs to the PRA-PH family.

The protein localises to the cytoplasm. The catalysed reaction is 1-(5-phospho-beta-D-ribosyl)-ATP + H2O = 1-(5-phospho-beta-D-ribosyl)-5'-AMP + diphosphate + H(+). The enzyme catalyses 1-(5-phospho-beta-D-ribosyl)-5'-AMP + H2O = 1-(5-phospho-beta-D-ribosyl)-5-[(5-phospho-beta-D-ribosylamino)methylideneamino]imidazole-4-carboxamide. Its pathway is amino-acid biosynthesis; L-histidine biosynthesis; L-histidine from 5-phospho-alpha-D-ribose 1-diphosphate: step 2/9. The protein operates within amino-acid biosynthesis; L-histidine biosynthesis; L-histidine from 5-phospho-alpha-D-ribose 1-diphosphate: step 3/9. This is Histidine biosynthesis bifunctional protein HisIE from Bacteroides thetaiotaomicron (strain ATCC 29148 / DSM 2079 / JCM 5827 / CCUG 10774 / NCTC 10582 / VPI-5482 / E50).